The following is a 317-amino-acid chain: Transaldolase (317 aa).

Lys126 functions as the Schiff-base intermediate with substrate in the catalytic mechanism.

The protein belongs to the transaldolase family. Type 1 subfamily. In terms of assembly, homodimer.

The protein localises to the cytoplasm. The enzyme catalyses D-sedoheptulose 7-phosphate + D-glyceraldehyde 3-phosphate = D-erythrose 4-phosphate + beta-D-fructose 6-phosphate. Its pathway is carbohydrate degradation; pentose phosphate pathway; D-glyceraldehyde 3-phosphate and beta-D-fructose 6-phosphate from D-ribose 5-phosphate and D-xylulose 5-phosphate (non-oxidative stage): step 2/3. Its function is as follows. Transaldolase is important for the balance of metabolites in the pentose-phosphate pathway. This Paraburkholderia phytofirmans (strain DSM 17436 / LMG 22146 / PsJN) (Burkholderia phytofirmans) protein is Transaldolase.